The chain runs to 340 residues: MKIMVAMSGGVDSTMTAKFLQEAGHEVQGCYMMLHQKPGYHEENIRKVKKVGEYLGIKVHILDLQDKFNEYVYDPFVRLYKEGKTPNPCALCNKFIKLGALLDFAKVNGCEKLATGHYVQVVDGFITCAKDPSKDQSYFLAQVPKEVLKDVIFPLGDKFKKDIKELARGVKVLEEFATQAESSEICFVENTYIEVLNKHYNTNLPGNVVDKDGNIIGRHQGYMHYTIGKRRGFEVFGAHEPHFVIKINAEKNEIVVGTKDDLAQKVVELENVNLFIDEDKFECETKIRYRSPKLEAFVEVDKSSKTAKLTLNQNALGVAQGQLCVMYDGDRVIASGFIKN.

Residues 6-13 (AMSGGVDS) and Met-32 each bind ATP. The Nucleophile role is filled by Cys-92. A disulfide bridge links Cys-92 with Cys-186. Gly-116 is an ATP binding site. Positions 134-136 (KDQ) are interaction with tRNA. The active-site Cysteine persulfide intermediate is the Cys-186. Residues 288–289 (RY) form an interaction with tRNA region.

It belongs to the MnmA/TRMU family.

Its subcellular location is the cytoplasm. It catalyses the reaction S-sulfanyl-L-cysteinyl-[protein] + uridine(34) in tRNA + AH2 + ATP = 2-thiouridine(34) in tRNA + L-cysteinyl-[protein] + A + AMP + diphosphate + H(+). Its function is as follows. Catalyzes the 2-thiolation of uridine at the wobble position (U34) of tRNA, leading to the formation of s(2)U34. This Campylobacter concisus (strain 13826) protein is tRNA-specific 2-thiouridylase MnmA.